The sequence spans 224 residues: C-reactive protein (224 aa).

A signal peptide spans 1 to 18 (MEKLLCFLVLTSLSHAFG). Gln19 is modified (pyrrolidone carboxylic acid). The 202-residue stretch at 23–224 (SRKAFVFPKE…EVFTKPQLWP (202 aa)) folds into the Pentraxin (PTX) domain. The cysteines at positions 54 and 115 are disulfide-linked. Asp78, Asn79, Glu156, Gln157, Asp158, and Gln168 together coordinate Ca(2+).

The protein belongs to the pentraxin family. As to quaternary structure, homopentamer. Pentraxin (or pentaxin) have a discoid arrangement of 5 non-covalently bound subunits. Interacts with FCN1; may regulate monocyte activation by FCN1. It depends on Ca(2+) as a cofactor. In terms of tissue distribution, found in plasma.

The protein resides in the secreted. Displays several functions associated with host defense: it promotes agglutination, bacterial capsular swelling, phagocytosis and complement fixation through its calcium-dependent binding to phosphorylcholine. Can interact with DNA and histones and may scavenge nuclear material released from damaged circulating cells. This is C-reactive protein (CRP) from Homo sapiens (Human).